A 509-amino-acid chain; its full sequence is Putative ATP-dependent RNA helicase QP509L (509 aa).

The 153-residue stretch at 110–262 (KKLLPPYGRF…KIIIHHLGQP (153 aa)) folds into the Helicase ATP-binding domain. 123–130 (LNTGLGKT) provides a ligand contact to ATP. A DEAH box motif is present at residues 215–218 (DEAH).

The protein belongs to the DEAD box helicase family. DEAH subfamily.

The catalysed reaction is ATP + H2O = ADP + phosphate + H(+). The sequence is that of Putative ATP-dependent RNA helicase QP509L from African swine fever virus (isolate Tick/Malawi/Lil 20-1/1983) (ASFV).